The sequence spans 246 residues: Polyhedrin (246 aa).

Belongs to the polyhedrin family.

In terms of biological role, major component of the virus occlusion bodies, which are large proteinaceous structures (polyhedra), that protect the virus from the outside environment for extended periods until they are ingested by insect larvae. This is Polyhedrin (PH) from Heliothis zea nuclear polyhedrosis virus (HzSNPV).